A 60-amino-acid polypeptide reads, in one-letter code: Myrmicitoxin(1)-Pr4a (60 aa).

An N-terminal signal peptide occupies residues 1-23; that stretch reads MKAIIFLFAVLTVVAIIIPIISG. A propeptide spanning residues 24 to 33 is cleaved from the precursor; it reads EPNAGPHAAS. Glutamine amide is present on Gln-59.

Belongs to the formicidae venom clade 2 family. In terms of tissue distribution, expressed by the venom gland.

The protein localises to the secreted. Toxin that causes a rapid and irreversible paralysis when intrathoracically injected into insects (blowflies). Does not cause spontaneous nocifensive behaviors by intraplantar injection in mice. The protein is Myrmicitoxin(1)-Pr4a of Pogonomyrmex rugosus (Desert harvester ant).